The following is a 175-amino-acid chain: Sec-independent protein translocase protein TatB (175 aa).

The helical transmembrane segment at 1–21 (MLDLGLSKMALIGVVALVVLG) threads the bilayer. The tract at residues 155–175 (SGAARVARHQPASLRRPTRFF) is disordered.

The protein belongs to the TatB family. The Tat system comprises two distinct complexes: a TatABC complex, containing multiple copies of TatA, TatB and TatC subunits, and a separate TatA complex, containing only TatA subunits. Substrates initially bind to the TatABC complex, which probably triggers association of the separate TatA complex to form the active translocon.

Its subcellular location is the cell inner membrane. Its function is as follows. Part of the twin-arginine translocation (Tat) system that transports large folded proteins containing a characteristic twin-arginine motif in their signal peptide across membranes. Together with TatC, TatB is part of a receptor directly interacting with Tat signal peptides. TatB may form an oligomeric binding site that transiently accommodates folded Tat precursor proteins before their translocation. The chain is Sec-independent protein translocase protein TatB from Burkholderia lata (strain ATCC 17760 / DSM 23089 / LMG 22485 / NCIMB 9086 / R18194 / 383).